A 416-amino-acid polypeptide reads, in one-letter code: UDP-N-acetylglucosamine 1-carboxyvinyltransferase (416 aa).

Position 22-23 (22-23 (KN)) interacts with phosphoenolpyruvate. Residue R91 participates in UDP-N-acetyl-alpha-D-glucosamine binding. C115 serves as the catalytic Proton donor. C115 carries the post-translational modification 2-(S-cysteinyl)pyruvic acid O-phosphothioketal. UDP-N-acetyl-alpha-D-glucosamine is bound by residues 120-124 (RPIDL), D305, and I327.

The protein belongs to the EPSP synthase family. MurA subfamily.

The protein localises to the cytoplasm. It carries out the reaction phosphoenolpyruvate + UDP-N-acetyl-alpha-D-glucosamine = UDP-N-acetyl-3-O-(1-carboxyvinyl)-alpha-D-glucosamine + phosphate. It participates in cell wall biogenesis; peptidoglycan biosynthesis. Functionally, cell wall formation. Adds enolpyruvyl to UDP-N-acetylglucosamine. This is UDP-N-acetylglucosamine 1-carboxyvinyltransferase from Buchnera aphidicola subsp. Acyrthosiphon pisum (strain 5A).